A 307-amino-acid chain; its full sequence is Ribosomal RNA small subunit methyltransferase A (307 aa).

Residues asparagine 35, valine 37, glycine 62, glutamate 83, aspartate 113, and asparagine 136 each coordinate S-adenosyl-L-methionine.

The protein belongs to the class I-like SAM-binding methyltransferase superfamily. rRNA adenine N(6)-methyltransferase family. RsmA subfamily.

The protein localises to the cytoplasm. It catalyses the reaction adenosine(1518)/adenosine(1519) in 16S rRNA + 4 S-adenosyl-L-methionine = N(6)-dimethyladenosine(1518)/N(6)-dimethyladenosine(1519) in 16S rRNA + 4 S-adenosyl-L-homocysteine + 4 H(+). Its function is as follows. Specifically dimethylates two adjacent adenosines (A1518 and A1519) in the loop of a conserved hairpin near the 3'-end of 16S rRNA in the 30S particle. May play a critical role in biogenesis of 30S subunits. The protein is Ribosomal RNA small subunit methyltransferase A of Bifidobacterium longum subsp. infantis (strain ATCC 15697 / DSM 20088 / JCM 1222 / NCTC 11817 / S12).